The primary structure comprises 127 residues: MAQSVPPGDIQTQPGTKIVFNAPYDDKHTYHIKVINSSARRIVYGIKTTNMKRLGVDPPCGVLDPKEAVLLAVSCDAFAFGQEDTNNDRITVEWTNTPDGAAKQFRREWFQGDGMVRRKNLPIEYNP.

Alanine 2 bears the N-acetylalanine mark. Positions 9–126 (DIQTQPGTKI…RRKNLPIEYN (118 aa)) constitute an MSP domain.

Sperm.

The protein localises to the cell projection. It localises to the pseudopodium. It is found in the cytoplasm. The protein resides in the cytoskeleton. Central component in molecular interactions underlying sperm crawling. Forms an extensive filament system that extends from sperm villipoda, along the leading edge of the pseudopod. This Caenorhabditis elegans protein is Major sperm protein 55/57 (msp-55).